The sequence spans 388 residues: Succinate--CoA ligase [ADP-forming] subunit beta (388 aa).

The ATP-grasp domain maps to 9–244; the sequence is KQLFARYGLP…QSQEDPREAQ (236 aa). ATP-binding positions include K46, 53 to 55, E99, T102, and E107; that span reads GRG. Positions 199 and 213 each coordinate Mg(2+). Residues N264 and 321–323 contribute to the substrate site; that span reads GIV.

Belongs to the succinate/malate CoA ligase beta subunit family. In terms of assembly, heterotetramer of two alpha and two beta subunits. Mg(2+) serves as cofactor.

The enzyme catalyses succinate + ATP + CoA = succinyl-CoA + ADP + phosphate. It carries out the reaction GTP + succinate + CoA = succinyl-CoA + GDP + phosphate. It functions in the pathway carbohydrate metabolism; tricarboxylic acid cycle; succinate from succinyl-CoA (ligase route): step 1/1. In terms of biological role, succinyl-CoA synthetase functions in the citric acid cycle (TCA), coupling the hydrolysis of succinyl-CoA to the synthesis of either ATP or GTP and thus represents the only step of substrate-level phosphorylation in the TCA. The beta subunit provides nucleotide specificity of the enzyme and binds the substrate succinate, while the binding sites for coenzyme A and phosphate are found in the alpha subunit. The protein is Succinate--CoA ligase [ADP-forming] subunit beta of Escherichia coli O8 (strain IAI1).